The chain runs to 71 residues: uncharacterized protein (71 aa).

Residues 5-22 (VVMCSGLFCSVFAGAFML) traverse the membrane as a helical segment.

The protein resides in the membrane. This is an uncharacterized protein from Bacillus subtilis (strain 168).